A 392-amino-acid chain; its full sequence is Stilbene synthase 1 (392 aa).

Residue 55–58 (KFNR) coordinates substrate. Cys-164 is a catalytic residue. Substrate-binding positions include Leu-267 and 305–307 (GGP).

The protein belongs to the thiolase-like superfamily. Chalcone/stilbene synthases family. As to quaternary structure, homodimer. As to expression, in leaves, expressed in palisade and spongy parenchyma cells and, to a lesser extent, in epidermal cells after induction.

It is found in the cytoplasm. It carries out the reaction 4-coumaroyl-CoA + 3 malonyl-CoA + 3 H(+) = trans-resveratrol + 4 CO2 + 4 CoA. The protein operates within phytoalexin biosynthesis; 3,4',5-trihydroxystilbene biosynthesis; 3,4',5-trihydroxystilbene from trans-4-coumarate: step 2/2. Functionally, mediates resistance to pathogens which are sensitive to stilbenes such as Botrytis cinerea, Eutypa lata and Plasmopora viticola by enhancing the production of phytoalexins. Confers resistance to Phytophthora palmivora when expressed in papaya. The sequence is that of Stilbene synthase 1 (VINST1) from Vitis vinifera (Grape).